Consider the following 319-residue polypeptide: Protein MGF 360-8L (319 aa).

This sequence belongs to the asfivirus MGF 360 family.

In terms of biological role, plays a role in virus cell tropism, and may be required for efficient virus replication in macrophages. This chain is Protein MGF 360-8L, found in Ornithodoros (relapsing fever ticks).